The sequence spans 123 residues: Large ribosomal subunit protein bL12 (123 aa).

Positions 98 to 123 are disordered; that stretch reads KEGVSKEEAEEIKSKLEDAGATVELK. Residues 100–115 show a composition bias toward basic and acidic residues; the sequence is GVSKEEAEEIKSKLED.

This sequence belongs to the bacterial ribosomal protein bL12 family. Homodimer. Part of the ribosomal stalk of the 50S ribosomal subunit. Forms a multimeric L10(L12)X complex, where L10 forms an elongated spine to which 2 to 4 L12 dimers bind in a sequential fashion. Binds GTP-bound translation factors.

Forms part of the ribosomal stalk which helps the ribosome interact with GTP-bound translation factors. Is thus essential for accurate translation. The protein is Large ribosomal subunit protein bL12 of Halothermothrix orenii (strain H 168 / OCM 544 / DSM 9562).